A 519-amino-acid chain; its full sequence is MTSTFNPRECKLSKQEGQNYGFFLRIEKDTEGHLVRVVEKGSPAEKAGLQDGDRVLRINDVFVDKEEHMQVVDLVRKSGNSVTLLVLDGDSYEKAVKTRVDLKELGQRQKEQGLSDNTLSPVMNGGVQTWTQPRLCYLVKEGGSYGFSLKTVQGKKGVYMTDITPQGVAMKAGVLADDHLIEVNGENVEDASHEQVVEKVKKSGSRVMFLLVDKETDKHHVEQKIQFKRETASLKLLPHQPRIVEMKKGSNGYGFYLRAGSEQKGQIIKDIDSGSPAEEAGLKNNDLVVAVNGESVETLDHDSVVEMIRKGGDQTSLLVVDKETDNMYRLAHFSPFLYYQSQELPNGSVKEAPAPTPTSLEVSSPPDTTEEVDHKPKLCRLAKGENGYGFHLNAIRGLPGSFIKEVQKGGPADLAGLEDEDVIIEVNGVNVLDEPYEKVVDRIQSSGKNVTLLVCGKKAYDYFQAKKIPIVSSLADPPDTPPDSKEGIVVESKHDSHMAKERAHSTASHSSSNSEDTEM.

PDZ domains follow at residues 9–90 (ECKL…LDGD), 134–215 (RLCY…VDKE), and 243–323 (IVEM…VDKE). 5 positions are modified to phosphoserine: Ser148, Ser192, Ser250, Ser334, and Ser348. Residues 347 to 374 (GSVKEAPAPTPTSLEVSSPPDTTEEVDH) are disordered. A compositionally biased stretch (polar residues) spans 357 to 367 (PTSLEVSSPPD). In terms of domain architecture, PDZ 4 spans 378–458 (LCRLAKGENG…NVTLLVCGKK (81 aa)). Residue Thr451 is modified to Phosphothreonine. The segment at 473–519 (SLADPPDTPPDSKEGIVVESKHDSHMAKERAHSTASHSSSNSEDTEM) is disordered. The segment covering 482-504 (PDSKEGIVVESKHDSHMAKERAH) has biased composition (basic and acidic residues). Phosphoserine is present on residues Ser492, Ser508, Ser510, Ser511, Ser512, and Ser514. Residues 505 to 519 (STASHSSSNSEDTEM) show a composition bias toward low complexity.

This sequence belongs to the NHER family. Interacts with PDZK1IP1 and ABCC2. Binds to the C-terminal region of SLC26A3. Interacts (via PDZ domains 1 and 3) with SCARB1 (C-terminal domain). Forms a heterodimeric complex with NHERF1. Interacts with AKAP2, BCR, CFTR, SLCO1A1, SLC22A12, SLC22A4, SLC22A5, NHERF2 and SLC17A1. Component of a complex, composed of PDZK1, SYNGAP1, KLHL17 and NMDA receptors. Interacts (via PDZ1 domain) directly with KLHL17; the interaction is important for integrity of actin cytoskeleton structures in neurons. Interacts (via C-terminal PDZ domain) with SLC26A6 (via C-terminal domain). Interacts (via C-terminal PDZ domain) with SLC9A3 (via C-terminal domain). Interacts (via the first PDZ domain) with PTGIR (via non-isoprenylated C-terminus). Interacts (via PDZ domains 1 and 3) with SLC5A8 (via PDZ-binding motif); interaction increases nicotinate transport activity of SLC5A8.

It localises to the membrane. The protein resides in the cell membrane. In terms of biological role, a scaffold protein that connects plasma membrane proteins and regulatory components, regulating their surface expression in epithelial cells apical domains. May be involved in the coordination of a diverse range of regulatory processes for ion transport and second messenger cascades. In complex with NHERF1, may cluster proteins that are functionally dependent in a mutual fashion and modulate the trafficking and the activity of the associated membrane proteins. May play a role in the cellular mechanisms associated with multidrug resistance through its interaction with ABCC2 and PDZK1IP1. May potentiate the CFTR chloride channel activity. Required for normal cell-surface expression of SCARB1. Plays a role in maintaining normal plasma cholesterol levels via its effects on SCARB1. Plays a role in the normal localization and function of the chloride-anion exchanger SLC26A6 to the plasma membrane in the brush border of the proximal tubule of the kidney. May be involved in the regulation of proximal tubular Na(+)-dependent inorganic phosphate cotransport therefore playing an important role in tubule function. The chain is Na(+)/H(+) exchange regulatory cofactor NHE-RF3 (PDZK1) from Pongo abelii (Sumatran orangutan).